The sequence spans 206 residues: N-(5'-phosphoribosyl)anthranilate isomerase (206 aa).

The protein belongs to the TrpF family.

The enzyme catalyses N-(5-phospho-beta-D-ribosyl)anthranilate = 1-(2-carboxyphenylamino)-1-deoxy-D-ribulose 5-phosphate. The protein operates within amino-acid biosynthesis; L-tryptophan biosynthesis; L-tryptophan from chorismate: step 3/5. The sequence is that of N-(5'-phosphoribosyl)anthranilate isomerase from Chlamydia caviae (strain ATCC VR-813 / DSM 19441 / 03DC25 / GPIC) (Chlamydophila caviae).